A 330-amino-acid chain; its full sequence is Probable allantoicase (330 aa).

It belongs to the allantoicase family.

The catalysed reaction is allantoate + H2O = (S)-ureidoglycolate + urea. It functions in the pathway nitrogen metabolism; (S)-allantoin degradation; (S)-ureidoglycolate from allantoate (aminidohydrolase route): step 1/1. This chain is Probable allantoicase, found in Photobacterium profundum (strain SS9).